The primary structure comprises 645 residues: 1-deoxy-D-xylulose-5-phosphate synthase (645 aa).

Residues histidine 87 and 128 to 130 contribute to the thiamine diphosphate site; that span reads GHS. Aspartate 159 provides a ligand contact to Mg(2+). Residues 160 to 161, asparagine 188, phenylalanine 295, and glutamate 384 each bind thiamine diphosphate; that span reads GA. Asparagine 188 contacts Mg(2+).

The protein belongs to the transketolase family. DXPS subfamily. As to quaternary structure, homodimer. Requires Mg(2+) as cofactor. Thiamine diphosphate is required as a cofactor.

It carries out the reaction D-glyceraldehyde 3-phosphate + pyruvate + H(+) = 1-deoxy-D-xylulose 5-phosphate + CO2. Its pathway is metabolic intermediate biosynthesis; 1-deoxy-D-xylulose 5-phosphate biosynthesis; 1-deoxy-D-xylulose 5-phosphate from D-glyceraldehyde 3-phosphate and pyruvate: step 1/1. Functionally, catalyzes the acyloin condensation reaction between C atoms 2 and 3 of pyruvate and glyceraldehyde 3-phosphate to yield 1-deoxy-D-xylulose-5-phosphate (DXP). In Alcanivorax borkumensis (strain ATCC 700651 / DSM 11573 / NCIMB 13689 / SK2), this protein is 1-deoxy-D-xylulose-5-phosphate synthase.